The sequence spans 598 residues: Peptidoglycan D,D-transpeptidase FtsI homolog (598 aa).

Residues 12 to 33 (IVLVWILFFSGSSLLLGRLFYL) traverse the membrane as a helical segment. Residue Ser291 is the Acyl-ester intermediate of the active site.

This sequence belongs to the transpeptidase family.

It localises to the plastid. The protein resides in the chloroplast membrane. The catalysed reaction is Preferential cleavage: (Ac)2-L-Lys-D-Ala-|-D-Ala. Also transpeptidation of peptidyl-alanyl moieties that are N-acyl substituents of D-alanine.. In Mesostigma viride (Green alga), this protein is Peptidoglycan D,D-transpeptidase FtsI homolog (ftsI).